A 714-amino-acid chain; its full sequence is Polynucleotide 5'-hydroxyl-kinase NOL9 (714 aa).

Position 2 is an N-acetylalanine (alanine 2). The Nucleolar localization signal signature appears at 31 to 47; the sequence is RRGRRRFGVLTRVELRR. The interval 80–133 is disordered; sequence ARSRPAPRSPPTPSVPPAPCTASATCSLLNPRNHSTPQSRAGRPVRKVSPNVTQ. Positions 86–98 are enriched in pro residues; sequence PRSPPTPSVPPAP. Residues 107–118 show a composition bias toward polar residues; sequence LLNPRNHSTPQS. At serine 128 the chain carries Phosphoserine. 322-329 is an ATP binding site; the sequence is GACDIGKS. Positions 495 to 714 are interaction with LAS1L; that stretch reads FTYEEKESSP…PRHKLRQRRK (220 aa). A Glycyl lysine isopeptide (Lys-Gly) (interchain with G-Cter in SUMO2) cross-link involves residue lysine 500. Serine 502 bears the Phosphoserine mark.

This sequence belongs to the Clp1 family. NOL9/GRC3 subfamily. As to quaternary structure, interacts with PELP1, WDR18 and SENP3. Interacts with LAS1L to form an ITS2 pre-rRNA endonuclease-kinase complex.

Its subcellular location is the nucleus. It is found in the nucleolus. It carries out the reaction a 5'-end dephospho-2'-deoxyribonucleoside-DNA + ATP = a 5'-end 5'-phospho-2'-deoxyribonucleoside-DNA + ADP + H(+). The enzyme catalyses a 5'-end dephospho-ribonucleoside-RNA + ATP = a 5'-end 5'-phospho-ribonucleoside-RNA + ADP + H(+). Functionally, polynucleotide kinase that can phosphorylate the 5'-hydroxyl groups of single-stranded and double-stranded RNA and DNA substrates. Involved in rRNA processing and its kinase activity is required for the processing of the 32S precursor into 5.8S and 28S rRNAs, more specifically for the generation of the major 5.8S(S) form. Required for the efficient pre-rRNA processing of internal transcribed spacer 2 (ITS2). Associates with LAS1L to form an ITS2 pre-rRNA endonuclease-kinase complex and is responsible for the transport of this complex into the nucleolus. This chain is Polynucleotide 5'-hydroxyl-kinase NOL9, found in Mus musculus (Mouse).